The sequence spans 464 residues: Argininosuccinate lyase (464 aa).

It belongs to the lyase 1 family. Argininosuccinate lyase subfamily.

It is found in the cytoplasm. The catalysed reaction is 2-(N(omega)-L-arginino)succinate = fumarate + L-arginine. Its pathway is amino-acid biosynthesis; L-arginine biosynthesis; L-arginine from L-ornithine and carbamoyl phosphate: step 3/3. This is Argininosuccinate lyase from Crocosphaera subtropica (strain ATCC 51142 / BH68) (Cyanothece sp. (strain ATCC 51142)).